The chain runs to 768 residues: DNA ligase (768 aa).

Residues 30-34 (DAEYD), 79-80 (SL), and glutamate 190 each bind NAD(+). The active-site N6-AMP-lysine intermediate is the lysine 192. The NAD(+) site is built by arginine 213, glutamate 250, lysine 367, and lysine 391. Zn(2+) contacts are provided by cysteine 485, cysteine 488, cysteine 503, and cysteine 509. The BRCT domain occupies 678–767 (AAEQPLSGLS…IPPEIQARMQ (90 aa)).

The protein belongs to the NAD-dependent DNA ligase family. LigA subfamily. The cofactor is Mg(2+). Requires Mn(2+) as cofactor.

It carries out the reaction NAD(+) + (deoxyribonucleotide)n-3'-hydroxyl + 5'-phospho-(deoxyribonucleotide)m = (deoxyribonucleotide)n+m + AMP + beta-nicotinamide D-nucleotide.. Functionally, DNA ligase that catalyzes the formation of phosphodiester linkages between 5'-phosphoryl and 3'-hydroxyl groups in double-stranded DNA using NAD as a coenzyme and as the energy source for the reaction. It is essential for DNA replication and repair of damaged DNA. The sequence is that of DNA ligase from Magnetococcus marinus (strain ATCC BAA-1437 / JCM 17883 / MC-1).